The following is a 226-amino-acid chain: Uracil-DNA glycosylase (226 aa).

Aspartate 64 (proton acceptor) is an active-site residue.

Belongs to the uracil-DNA glycosylase (UDG) superfamily. UNG family.

The protein resides in the cytoplasm. The enzyme catalyses Hydrolyzes single-stranded DNA or mismatched double-stranded DNA and polynucleotides, releasing free uracil.. Functionally, excises uracil residues from the DNA which can arise as a result of misincorporation of dUMP residues by DNA polymerase or due to deamination of cytosine. This is Uracil-DNA glycosylase from Vibrio campbellii (strain ATCC BAA-1116).